Reading from the N-terminus, the 202-residue chain is Secreted RxLR effector protein 11 (202 aa).

A signal peptide spans 1–23 (MRLNFTKLFAGAVALAWTTESMA). The short motif at 49 to 61 (RRLRTINGADEER) is the RxLR-dEER element.

Belongs to the RxLR effector family.

The protein resides in the secreted. It localises to the host cytoplasm. It is found in the host nucleus. In terms of biological role, effector that acts as a broad suppressor of cell death to interrupt plant immunity. Inhibits cell death induced by cell death-inducing proteins, including the PAMP elicitor INF1 from P.infestans. The sequence is that of Secreted RxLR effector protein 11 from Plasmopara viticola (Downy mildew of grapevine).